The primary structure comprises 400 residues: Cytochrome b (400 aa).

A run of 4 helical transmembrane segments spans residues 32–52 (FGSL…TLAM), 76–98 (WLIR…LHIG), 113–133 (TWSI…LGYV), and 179–199 (FFSL…MHLI). Heme b is bound by residues His-82 and His-96. Heme b-binding residues include His-183 and His-197. Position 202 (His-202) interacts with a ubiquinone. 4 consecutive transmembrane segments (helical) span residues 226 to 246 (YLFK…IFVF), 290 to 310 (AVGV…PYLD), 322 to 342 (LSKV…QLGA), and 349 to 369 (FIVF…IIIP).

It belongs to the cytochrome b family. Fungal cytochrome b-c1 complex contains 10 subunits; 3 respiratory subunits, 2 core proteins and 5 low-molecular weight proteins. Cytochrome b-c1 complex is a homodimer. Requires heme b as cofactor.

It is found in the mitochondrion inner membrane. Its function is as follows. Component of the ubiquinol-cytochrome c reductase complex (complex III or cytochrome b-c1 complex) that is part of the mitochondrial respiratory chain. The b-c1 complex mediates electron transfer from ubiquinol to cytochrome c. Contributes to the generation of a proton gradient across the mitochondrial membrane that is then used for ATP synthesis. The sequence is that of Cytochrome b (cob) from Epidermophyton floccosum.